We begin with the raw amino-acid sequence, 94 residues long: Small ribosomal subunit protein bS18 (94 aa).

It belongs to the bacterial ribosomal protein bS18 family. Part of the 30S ribosomal subunit. Forms a tight heterodimer with protein bS6.

Its function is as follows. Binds as a heterodimer with protein bS6 to the central domain of the 16S rRNA, where it helps stabilize the platform of the 30S subunit. This is Small ribosomal subunit protein bS18 from Albidiferax ferrireducens (strain ATCC BAA-621 / DSM 15236 / T118) (Rhodoferax ferrireducens).